The following is a 722-amino-acid chain: MSSQGHHKMSGGGKKGAMEQDYTDVVDLGDRFSADMARLCMNEQYADVEFIVEEERIPAHRVILAARSEYFRALLYGGMAETTQRQIPLEVPLEAFKVLLRYIYSGTLLLSTLDEDSTIDVLGMANQYGFQDLEMAISNYLRQYLALDNVCMILDAARLYNLEELTEVCLMFMDRNAGDLLLHNSFNTLSKESLEEVLRRDCFFAPEVQIFLAVWKWSRFNSNVDFKSVVSYVRLPLMNLEHLLQVVRPSGILDPDKILDAIDERSTSKALPYRAALWPEENVAAETFLSRCIQGECRDALLDGDVTTYDMENGYTRHCITDSKDAGIVVELGTFCMINHIRMLLWDRDSRAYSYYVEVSGDQQHWDRVVDYSDYHCRSWQYLYFEARPVRFIRLVGTQNTVNRVFHVVGLEAMHTAKVPRLVNHFVAPKTNVATVEMSAIVTDGVSRTRNALINGDYVRYDWDSGYTCHQLGSGEIVVRLGQPYYLGSMRLLLWDCDDRTYSFYIEISTNRKEWQMVVDRRNDRTRSWQNFHFTPRPVVYIRIVGTRNTANEIFHCVHLECPTQDKNYLKKIADMEKEREKREKEKKTAKTDDDNIASTSGSSLASGHAESPSTSSSSSQSVLRSIHWPPQTREVAVAPLTPPALSPPGTPALPAPLTPATSSPHNNHEQNQPSNISADASHHTSPSSRSNPSPSLSRSRSQSAELEPVPPLVELDTRETL.

The BTB domain occupies 46–112; it reads ADVEFIVEEE…IYSGTLLLST (67 aa). Positions 151 to 247 constitute a BACK domain; sequence CMILDAARLY…MNLEHLLQVV (97 aa). A coiled-coil region spans residues 565-593; the sequence is QDKNYLKKIADMEKEREKREKEKKTAKTD. Basic and acidic residues predominate over residues 577 to 594; it reads EKEREKREKEKKTAKTDD. Disordered stretches follow at residues 577–626 and 640–722; these read EKER…VLRS and PLTP…RETL. Residues 597–606 are compositionally biased toward polar residues; that stretch reads IASTSGSSLA. The segment covering 607 to 626 has biased composition (low complexity); it reads SGHAESPSTSSSSSQSVLRS. A compositionally biased stretch (pro residues) spans 641–658; it reads LTPPALSPPGTPALPAPL. Over residues 670–679 the composition is skewed to polar residues; the sequence is EQNQPSNISA. The segment covering 686 to 704 has biased composition (low complexity); the sequence is SPSSRSNPSPSLSRSRSQS.

In terms of tissue distribution, detected in the brain (at protein level).

Its subcellular location is the cytoplasm. In terms of biological role, essential for the homeostatic regulation of sleep and motor activity, by depressing hyperactivity and wakefulness. May function, at least in part, by ensuring dopamine biosynthesis. The protein is BTB/POZ domain-containing protein 9 of Drosophila melanogaster (Fruit fly).